We begin with the raw amino-acid sequence, 880 residues long: Kinesin heavy chain (880 aa).

The 324-residue stretch at 4 to 327 (SIKVVCRFRP…LRFGMRAKAI (324 aa)) folds into the Kinesin motor domain. ATP contacts are provided by residues 85–92 (GQTGAGKS) and 235–242 (GSEKVGKT). The disordered stretch occupies residues 388–426 (VSGAKAAAAQTPRPSTPSRLATESRAETPVAERSATPGI). Polar residues predominate over residues 399–408 (PRPSTPSRLA). Residues 428 to 849 (IDKDEREEFL…QEKLTTASHR (422 aa)) adopt a coiled-coil conformation.

This sequence belongs to the TRAFAC class myosin-kinesin ATPase superfamily. Kinesin family. Kinesin subfamily.

It localises to the cytoplasm. The protein resides in the cytoskeleton. In terms of biological role, kinesin is a microtubule-associated force-producing protein that may play a role in organelle transport. Its motor activity is directed toward the microtubule's plus end. This chain is Kinesin heavy chain (klp1), found in Botryotinia fuckeliana (Noble rot fungus).